Reading from the N-terminus, the 345-residue chain is Phosphoribosylformylglycinamidine cyclo-ligase (345 aa).

Belongs to the AIR synthase family.

It is found in the cytoplasm. The enzyme catalyses 2-formamido-N(1)-(5-O-phospho-beta-D-ribosyl)acetamidine + ATP = 5-amino-1-(5-phospho-beta-D-ribosyl)imidazole + ADP + phosphate + H(+). The protein operates within purine metabolism; IMP biosynthesis via de novo pathway; 5-amino-1-(5-phospho-D-ribosyl)imidazole from N(2)-formyl-N(1)-(5-phospho-D-ribosyl)glycinamide: step 2/2. In Salmonella typhimurium (strain LT2 / SGSC1412 / ATCC 700720), this protein is Phosphoribosylformylglycinamidine cyclo-ligase.